A 427-amino-acid polypeptide reads, in one-letter code: Piwi protein (427 aa).

Residues 38-167 (PYEVPSLKYN…VQFVSKLGGK (130 aa)) form a mid domain region. The Piwi domain occupies 110 to 406 (GIMLVLPEYN…VAGIIANVNR (297 aa)). The interval 118–124 (YNTPLYY) is binds 5'-phosphorylated end of guide DNA. Residues 147–148 (RN) form a binds target DNA region. Residues 150 to 155 (TFYVDN) are binds guide DNA. The a divalent metal cation site is built by glutamine 159 and leucine 427. Positions 168-427 (PWILNVDPEK…RSLQTNPWFL (260 aa)) are PIWI domain.

Belongs to the argonaute family. Short pAgo subfamily. As to quaternary structure, homodimer probably stabilized by DNA. Each subunit is capable of interacting with a DNA molecule. It depends on a divalent metal cation as a cofactor.

Might play a role in defense against invading genetic elements, using short nucleic acid sequences as guides to bind complementary target strands, resulting in slicing of the target nucleic acid. Binds nucleic acids with decreasing affinity in the following order; ssDNA, ssRNA, dsDNA, RNA-DNA, RNA-RNA. Association of the 5' seed region of the guide strand (nucleotides 2-7) with AfPiwi increases affinity for the corresponding target strand; the greatest increase in affinity is for guide DNA with target RNA. The protein is Piwi protein of Archaeoglobus fulgidus (strain ATCC 49558 / DSM 4304 / JCM 9628 / NBRC 100126 / VC-16).